A 405-amino-acid chain; its full sequence is Exodeoxyribonuclease 7 large subunit (405 aa).

The protein belongs to the XseA family. In terms of assembly, heterooligomer composed of large and small subunits.

It is found in the cytoplasm. It catalyses the reaction Exonucleolytic cleavage in either 5'- to 3'- or 3'- to 5'-direction to yield nucleoside 5'-phosphates.. Functionally, bidirectionally degrades single-stranded DNA into large acid-insoluble oligonucleotides, which are then degraded further into small acid-soluble oligonucleotides. In Syntrophomonas wolfei subsp. wolfei (strain DSM 2245B / Goettingen), this protein is Exodeoxyribonuclease 7 large subunit.